The sequence spans 148 residues: UPF0756 membrane protein NMCC_1816 (148 aa).

4 helical membrane-spanning segments follow: residues L13–M35, H50–G70, F80–G100, and V121–L141.

The protein belongs to the UPF0756 family.

It is found in the cell membrane. This Neisseria meningitidis serogroup C (strain 053442) protein is UPF0756 membrane protein NMCC_1816.